A 5641-amino-acid chain; its full sequence is Cyclochlorotine synthetase (5641 aa).

Residues 95–124 (PENLNGHLIGSTNGHKKQWENDSADDKRGQ) form a disordered region. A compositionally biased stretch (basic and acidic residues) spans 111–124 (KQWENDSADDKRGQ). The tract at residues 217–622 (FTENVQRYPT…GRRDTQVKIR (406 aa)) is adenylation (A) domain 1. In terms of domain architecture, Carrier 1 spans 816 to 892 (TEEEYKIQTL…DLVSNCKMSA (77 aa)). Residues 821–889 (KIQTLKEIWS…QLSDLVSNCK (69 aa)) are thiolation (T) domain 1. Ser-853 is subject to O-(pantetheine 4'-phosphoryl)serine. The condensation (C) domain 1 stretch occupies residues 926–1333 (EDVYPCTPLQ…AHVAEQIGQP (408 aa)). The tract at residues 1390–1768 (DGNLTFEELN…ISRATTQIKI (379 aa)) is adenylation (A) domain 2. Positions 1902-1978 (IELSEKQENM…QLVMIATELT (77 aa)) constitute a Carrier 2 domain. A thiolation (T) domain 2 region spans residues 1907–1975 (KQENMARLWA…RFDQLVMIAT (69 aa)). Ser-1939 is modified (O-(pantetheine 4'-phosphoryl)serine). The interval 2022–2438 (DIYACTPFQE…DLASEQDLAK (417 aa)) is condensation (C) domain 2. The segment at 2459–2859 (AEKARQHPNK…GRADTQVKLR (401 aa)) is adenylation (A) domain 3. A Carrier 3 domain is found at 2976–3052 (GPLTEMETTL…GMAIKIQPIH (77 aa)). Positions 2977–3049 (PLTEMETTLA…NLAGMAIKIQ (73 aa)) are thiolation (T) domain 3. Ser-3013 carries the post-translational modification O-(pantetheine 4'-phosphoryl)serine. Positions 3089-3482 (DIYPCTPLQV…LETVLSAFST (394 aa)) are condensation (C) domain 3. Positions 3523-3873 (VQRAPDKVAI…IARKDLQVKL (351 aa)) are adenylation (A) domain 4. The Carrier 4 domain maps to 4005-4081 (IPSTPTEMKM…ELATKIAPRI (77 aa)). Positions 4010 to 4078 (TEMKMQQLWA…RLSELATKIA (69 aa)) are thiolation (T) domain 4. Position 4042 is an O-(pantetheine 4'-phosphoryl)serine (Ser-4042). The interval 4123–4549 (KDVYPCTPLQ…QSLDSLSQQD (427 aa)) is condensation (C) domain 4. Positions 4574–4982 (QEIAGRHPDA…GRIGTDIKLR (409 aa)) are adenylation (A) domain 5. A Carrier 5 domain is found at 5118 to 5194 (PPSTQEEKVI…SLAEKISWES (77 aa)). A thiolation (T) domain 5 region spans residues 5123-5191 (EEKVIAALWA…KLASLAEKIS (69 aa)). Ser-5155 is subject to O-(pantetheine 4'-phosphoryl)serine. The condensation (C) domain 5 stretch occupies residues 5260–5556 (AYLDIGPDVQ…DKCTTCVSGS (297 aa)).

It belongs to the NRP synthetase family.

Its pathway is mycotoxin biosynthesis. In terms of biological role, nonribosomal peptide synthetase; part of the gene cluster that mediates the biosynthesis of the mycotoxin cyclochlorotine, a hepatotoxic and carcinogenic cyclic chlorinated pentapeptide. Within the pathway, The NRPS cctN initially catalyzes the condensation of L-serine (Ser), Pro, L-2-aminobutyrate (2Abu), Ser, and beta-Phe in this order. During the chain elongation, side-chain hydroxy group of Ser4 would be used as a nucleophile, giving isocyclotine as a product of terminal condensation-like (CT) domain-catalyzed cyclization. After the dichlorination of Pro2 catalyzed by cctP2 to produce isocyclochlorotine, the cctO-mediated transacylation of isocyclochlorotine can furnish cyclochlorotine. The subsequent hydroxylation of cyclochlorotine by cctR yields hydroxycyclochlorotine as the final product. CctP1 probably acts as a phenylalanine aminomutase and provides the uncommon building block beta-Phe. Furthermore, 2Abu can be synthesized from threonine by one of the threonine dehydratases and transaminases localized outside of the cluster. The functions of the remaining proteins encoded by the cluster, cctM and cctT, have not been identified yet. The polypeptide is Cyclochlorotine synthetase (Talaromyces islandicus (Penicillium islandicum)).